The chain runs to 161 residues: Nucleotide-binding protein swp_1151 (161 aa).

This sequence belongs to the YajQ family.

Nucleotide-binding protein. The sequence is that of Nucleotide-binding protein swp_1151 from Shewanella piezotolerans (strain WP3 / JCM 13877).